Reading from the N-terminus, the 284-residue chain is Bifunctional protein FolD 2 (284 aa).

NADP(+)-binding positions include 166 to 168 (GAS) and Ile232.

Belongs to the tetrahydrofolate dehydrogenase/cyclohydrolase family. In terms of assembly, homodimer.

The enzyme catalyses (6R)-5,10-methylene-5,6,7,8-tetrahydrofolate + NADP(+) = (6R)-5,10-methenyltetrahydrofolate + NADPH. It carries out the reaction (6R)-5,10-methenyltetrahydrofolate + H2O = (6R)-10-formyltetrahydrofolate + H(+). It functions in the pathway one-carbon metabolism; tetrahydrofolate interconversion. In terms of biological role, catalyzes the oxidation of 5,10-methylenetetrahydrofolate to 5,10-methenyltetrahydrofolate and then the hydrolysis of 5,10-methenyltetrahydrofolate to 10-formyltetrahydrofolate. The polypeptide is Bifunctional protein FolD 2 (Pseudomonas putida (strain ATCC 47054 / DSM 6125 / CFBP 8728 / NCIMB 11950 / KT2440)).